The sequence spans 880 residues: Protein transport protein SEC23 A (880 aa).

The segment covering 1-13 has biased composition (polar residues); the sequence is MANLPKSSVNYPG. Residues 1–95 are disordered; it reads MANLPKSSVN…PPGPPVFNTP (95 aa). Pro residues predominate over residues 20–36; the sequence is PNRPSPQPDRTPVPHSP. The span at 57–70 shows a compositional bias: low complexity; it reads MSSPSMKSPSLLSP. 4 residues coordinate Zn(2+): Cys204, Cys207, Cys226, and Cys229. Residues 204–229 form a zinc finger-like region; it reads CLNCGAYSNPYSSILIGSGQWQCVIC.

This sequence belongs to the SEC23/SEC24 family. SEC24 subfamily. Component of the coat protein complex II (COPII), composed of at least five proteins: the Sec23/24 complex, the Sec13/31 complex and Sar1. Mostly expressed in seedlings, roots, cotyledons, leaves, trichomes, leaf primordia and flowers, and, to a lower extent, in mature siliques.

Its subcellular location is the cytoplasmic vesicle. The protein localises to the COPII-coated vesicle membrane. It localises to the endoplasmic reticulum membrane. It is found in the membrane. In terms of biological role, component of the coat protein complex II (COPII) which promotes the formation of transport vesicles from the endoplasmic reticulum (ER). The coat has two main functions, the physical deformation of the endoplasmic reticulum membrane into vesicles and the selection of cargo molecules. May contribute to COPII-coated vesicles formation and ER-Golgi vesicle transport. Together with SEC23D, essential for pollen wall development and exine patterning, probably by regulating endoplasmic reticulum (ER) export of lipids and proteins (e.g. sporopollenin) necessary for pollen wall formation. Also involved in plastid physiology in anther tapetal cells. This chain is Protein transport protein SEC23 A, found in Arabidopsis thaliana (Mouse-ear cress).